Reading from the N-terminus, the 353-residue chain is GTPase Obg (353 aa).

The Obg domain occupies 1 to 159; sequence MKFLDEAKVY…RWIWLRLKLI (159 aa). One can recognise an OBG-type G domain in the interval 160 to 327; the sequence is ADAGLVGLPN…VLRALVAVIG (168 aa). GTP-binding positions include 166–173, 191–195, 212–215, 279–282, and 308–310; these read GLPNAGKS, FTTLH, DIPG, NKID, and SGV. Residues Ser173 and Thr193 each coordinate Mg(2+).

The protein belongs to the TRAFAC class OBG-HflX-like GTPase superfamily. OBG GTPase family. In terms of assembly, monomer. The cofactor is Mg(2+).

It localises to the cytoplasm. Its function is as follows. An essential GTPase which binds GTP, GDP and possibly (p)ppGpp with moderate affinity, with high nucleotide exchange rates and a fairly low GTP hydrolysis rate. Plays a role in control of the cell cycle, stress response, ribosome biogenesis and in those bacteria that undergo differentiation, in morphogenesis control. The protein is GTPase Obg of Rhodopseudomonas palustris (strain TIE-1).